We begin with the raw amino-acid sequence, 462 residues long: Phosphoglycerate kinase, chloroplastic (462 aa).

A chloroplast-targeting transit peptide spans 1-61; that stretch reads MALSMKMRAN…AGRSRIVVEA (61 aa). Positions 83, 84, 86, 101, 123, 124, 126, 127, 183, 215, and 216 each coordinate (2R)-3-phosphoglycerate. G261 is a binding site for ADP. G261 contacts CDP. K263 and K267 together coordinate AMP. ATP is bound at residue K267. Residue G285 coordinates ADP. CDP is bound at residue G285. Residues G286 and G358 each coordinate AMP. The ATP site is built by G286 and G358. CDP-binding residues include G383 and F388. F388 serves as a coordination point for ADP. E389 contributes to the AMP binding site. E389, D420, and S421 together coordinate ATP. Residue D420 coordinates Mg(2+).

The protein belongs to the phosphoglycerate kinase family. As to quaternary structure, monomer. It depends on Mg(2+) as a cofactor.

The protein resides in the plastid. The protein localises to the chloroplast. The enzyme catalyses (2R)-3-phosphoglycerate + ATP = (2R)-3-phospho-glyceroyl phosphate + ADP. It functions in the pathway carbohydrate biosynthesis; Calvin cycle. This is Phosphoglycerate kinase, chloroplastic (PGK) from Volvox carteri (Green alga).